The following is a 95-amino-acid chain: Large ribosomal subunit protein bL27 (95 aa).

The propeptide occupies methionine 1–phenylalanine 6.

It belongs to the bacterial ribosomal protein bL27 family. Post-translationally, the N-terminus is cleaved by ribosomal processing cysteine protease Prp.

The sequence is that of Large ribosomal subunit protein bL27 from Caldanaerobacter subterraneus subsp. tengcongensis (strain DSM 15242 / JCM 11007 / NBRC 100824 / MB4) (Thermoanaerobacter tengcongensis).